The following is a 129-amino-acid chain: UPF0344 protein SAR0931 (129 aa).

The next 4 helical transmembrane spans lie at 1–21 (MLHL…ATYL), 36–56 (LHMV…WILI), 67–87 (MLLT…EVSI), and 99–119 (MFWI…ILPL).

Belongs to the UPF0344 family.

It is found in the cell membrane. The chain is UPF0344 protein SAR0931 from Staphylococcus aureus (strain MRSA252).